Consider the following 478-residue polypeptide: Antiviral innate immune response effector IFIT1 (478 aa).

TPR repeat units follow at residues 52-85 (VGIHNLLAYVKHLKGQNEEALKSLKEAEDLMQKE), 95-128 (LVTWSNFAWVYYHMGRLAEAQAYLDKVENICKKP), 139-174 (PEIDCEEGWALLKCGGKNYERAKACFEKALEGDHEN), 183-216 (ISAYRLDGFKLATKGYRQFSLLPLRQAVSLNPDN), 218-249 (YLKVLLALKLQDNGQEAEGEKYLEEALANMSS), and 251-284 (TYVFRYAAKFYRRKGSVDKALELLKKALQETPTS). Trp147 contacts mRNA. Position 190 (Gly190) interacts with RNA. RNA is bound by residues Lys259, His289, Gln290, and Lys336. 4 TPR repeats span residues 305–339 (ATKGQPRGQNREKIDKMIRLAIFHFESAVENKPTF), 340–373 (EVAHLDLARMYIEAGNHRKAEETFQKLLCMKPVV), 378–412 (QDIHLQYARFQEFQKKSEINAIIHYLKAIKIEQTS), and 437–470 (LESLSLLGFVYKLKGNMNEALEYYERALRLAADF).

Belongs to the IFIT family. As to quaternary structure, component of an interferon-dependent multiprotein complex, at least composed of IFIT1, IFIT2 and IFIT3. Interacts (via TPR repeats 1-4) with RPL15. Interacts with STING1/MITA; could disrupt STING1 interaction with MAVS or TBK1, acting as a negative-feedback regulator of virus-triggered signaling. Interacts with EIF3E; this could be an alternative way to inhibit translation. Phosphorylated. Post-translationally, ISGylated.

It localises to the cytoplasm. Plays a key role in the innate immune response as part of an interferon-dependent multiprotein complex, recognizing and sequestering viral RNAs that lack host-specific 2'-O-methylation at their 5' cap. By distinguishing these RNAs from host mRNAs, inhibits their translation by competing with the translation initiation factor eIF4E. Could also prevent viral replication through its interaction with DNA replication origin-binding protein E1 of several viruses. Causes the translocation of E1 from the nucleus to the cytoplasm and can also inhibit its helicase activity in vitro. This chain is Antiviral innate immune response effector IFIT1, found in Macaca fascicularis (Crab-eating macaque).